The sequence spans 2779 residues: Protein lava lamp (2779 aa).

3 disordered regions span residues 31–62 (LAGS…DSLK), 79–98 (ALRK…SMES), and 110–135 (KTRS…VSLL). Residues 33–51 (GSSNDLSSLQNVSASTTRG) show a composition bias toward polar residues. Phosphoserine is present on residues Ser34 and Ser35. A coiled-coil region spans residues 52–85 (TKGKGRLDSLKENLYKQQERLTALKERALRKSQD). Residues 79-91 (ALRKSQDERHKSS) show a composition bias toward basic and acidic residues. Ser95, Ser98, Ser122, and Ser133 each carry phosphoserine. The stretch at 141–175 (EKLLMLTQRTEQNRALLEQRKRDLAKSLLSVKSNI) forms a coiled coil. Phosphoserine is present on residues Ser186, Ser352, and Ser354. 2 coiled-coil regions span residues 220 to 607 (ESRV…AESI) and 659 to 716 (GETL…KDLI). Residues 337–352 (ERQRNLELEQEQEKAS) are compositionally biased toward basic and acidic residues. 4 disordered regions span residues 337 to 366 (ERQR…DAQV), 622 to 662 (RPAS…GETL), 711 to 730 (REKD…QELS), and 1716 to 1753 (QAQL…GGDA). Composition is skewed to low complexity over residues 717–730 (SSTS…QELS) and 1716–1740 (QAQL…QSQQ). Coiled coils occupy residues 751 to 1733 (LFEK…QHHH), 1785 to 1863 (TIED…KLIQ), and 1941 to 2433 (NEAP…QSQN). Disordered stretches follow at residues 2348–2367 (EDKE…GETV), 2484–2507 (EEVT…EATS), 2552–2578 (NRGG…TANE), and 2633–2665 (TERS…AGSN). Over residues 2488–2502 (QQQQRELPQSQQSTQ) the composition is skewed to low complexity. Residues 2504–2544 (EATSDIMQKMQKALETQEMEIVTLKEQLAIRSAEYARLAAQ) adopt a coiled-coil conformation. Residues 2600 to 2641 (DMRVEEMIVELVQLLEERDHLQLKLSDTLRQLETERSRVSDE) are a coiled coil. Residues 2643 to 2665 (SATASSSAASSSSPSKISSAGSN) are compositionally biased toward low complexity.

In terms of assembly, interacts with CLIP-190 and spectrin separately.

Its subcellular location is the golgi apparatus. It is found in the cytoplasmic vesicle. The protein resides in the autophagosome. Its function is as follows. Lva and spectrin may form a Golgi-based scaffold that mediates interaction of Golgi bodies with microtubules and facilitates Golgi-derived membrane secretion required for the formation of furrows during cellularization. Under starvation conditions recruited by ema to developing autophagsosomes where it may function in autophagosome growth. The protein is Protein lava lamp (lva) of Drosophila melanogaster (Fruit fly).